The following is a 177-amino-acid chain: Ribulose bisphosphate carboxylase small subunit, chloroplastic 3 (177 aa).

The N-terminal 56 residues, 1-56, are a transit peptide targeting the chloroplast; that stretch reads MASSMMASTAAAVARAGPAQSSMVPFNACRSSVPFPATRKANNNLSTLPGNGGRVS.

This sequence belongs to the RuBisCO small chain family. In terms of assembly, heterohexadecamer of 8 large and 8 small subunits.

It localises to the plastid. The protein resides in the chloroplast. In terms of biological role, ruBisCO catalyzes two reactions: the carboxylation of D-ribulose 1,5-bisphosphate, the primary event in carbon dioxide fixation, as well as the oxidative fragmentation of the pentose substrate. Both reactions occur simultaneously and in competition at the same active site. Although the small subunit is not catalytic it is essential for maximal activity. The protein is Ribulose bisphosphate carboxylase small subunit, chloroplastic 3 of Lemna gibba (Swollen duckweed).